Reading from the N-terminus, the 315-residue chain is Adenine deaminase (315 aa).

Residues His14, His16, and His194 each coordinate Zn(2+). Glu197 functions as the Proton donor in the catalytic mechanism. Position 275 (Asp275) interacts with Zn(2+). Residue Asp276 participates in substrate binding.

It belongs to the metallo-dependent hydrolases superfamily. Adenosine and AMP deaminases family. Adenine deaminase type 2 subfamily. Zn(2+) serves as cofactor.

The catalysed reaction is adenine + H2O + H(+) = hypoxanthine + NH4(+). In terms of biological role, catalyzes the hydrolytic deamination of adenine to hypoxanthine. Plays an important role in the purine salvage pathway and in nitrogen catabolism. This chain is Adenine deaminase, found in Pseudomonas putida (strain W619).